The sequence spans 229 residues: Cytidylate kinase (229 aa).

12 to 20 provides a ligand contact to ATP; that stretch reads GPSGAGKGT.

The protein belongs to the cytidylate kinase family. Type 1 subfamily.

Its subcellular location is the cytoplasm. The enzyme catalyses CMP + ATP = CDP + ADP. The catalysed reaction is dCMP + ATP = dCDP + ADP. The polypeptide is Cytidylate kinase (Pseudomonas aeruginosa (strain UCBPP-PA14)).